The following is a 433-amino-acid chain: Glutamate-1-semialdehyde 2,1-aminomutase (433 aa).

Lys-272 carries the post-translational modification N6-(pyridoxal phosphate)lysine.

It belongs to the class-III pyridoxal-phosphate-dependent aminotransferase family. HemL subfamily. Homodimer. Pyridoxal 5'-phosphate serves as cofactor.

It is found in the cytoplasm. It carries out the reaction (S)-4-amino-5-oxopentanoate = 5-aminolevulinate. It participates in porphyrin-containing compound metabolism; protoporphyrin-IX biosynthesis; 5-aminolevulinate from L-glutamyl-tRNA(Glu): step 2/2. The polypeptide is Glutamate-1-semialdehyde 2,1-aminomutase (Magnetococcus marinus (strain ATCC BAA-1437 / JCM 17883 / MC-1)).